Here is a 253-residue protein sequence, read N- to C-terminus: Probable transcriptional regulatory protein SynRCC307_1833 (253 aa).

The protein belongs to the TACO1 family.

Its subcellular location is the cytoplasm. The sequence is that of Probable transcriptional regulatory protein SynRCC307_1833 from Synechococcus sp. (strain RCC307).